The chain runs to 200 residues: dTTP/UTP pyrophosphatase (200 aa).

The Proton acceptor role is filled by Asp-72.

It belongs to the Maf family. YhdE subfamily. Requires a divalent metal cation as cofactor.

It is found in the cytoplasm. The enzyme catalyses dTTP + H2O = dTMP + diphosphate + H(+). It carries out the reaction UTP + H2O = UMP + diphosphate + H(+). Nucleoside triphosphate pyrophosphatase that hydrolyzes dTTP and UTP. May have a dual role in cell division arrest and in preventing the incorporation of modified nucleotides into cellular nucleic acids. This chain is dTTP/UTP pyrophosphatase, found in Pseudomonas savastanoi pv. phaseolicola (strain 1448A / Race 6) (Pseudomonas syringae pv. phaseolicola (strain 1448A / Race 6)).